The sequence spans 214 residues: UPF0690 protein C1orf52 homolog (214 aa).

2 disordered regions span residues 1-66 (MSDE…SVSK) and 81-214 (DSRA…QCLD). A compositionally biased stretch (low complexity) spans 32–44 (PEATASSAPAEPQ). 2 stretches are compositionally biased toward basic and acidic residues: residues 49 to 61 (RAAE…DELF) and 81 to 97 (DSRA…EFKV). A compositionally biased stretch (acidic residues) spans 152–165 (EEEEEEQQPDSDDD). Ser-162 carries the phosphoserine modification. 2 stretches are compositionally biased toward basic and acidic residues: residues 179–192 (VETF…KRDI) and 200–214 (NFVE…QCLD).

It belongs to the UPF0690 family.

This Danio rerio (Zebrafish) protein is UPF0690 protein C1orf52 homolog.